The primary structure comprises 675 residues: L-type lectin-domain containing receptor kinase IX.2 (675 aa).

The signal sequence occupies residues M1–S35. N9, N39, N110, N146, N179, N186, N191, and N212 each carry an N-linked (GlcNAc...) asparagine glycan. Residues L36–L269 form a legume-lectin like region. The Extracellular segment spans residues L36–R281. Residues I282 to T302 traverse the membrane as a helical segment. The Cytoplasmic segment spans residues T303–R675. One can recognise a Protein kinase domain in the interval F350–E631. Residues L356–V364 and K379 each bind ATP. D475 serves as the catalytic Proton acceptor.

In the C-terminal section; belongs to the protein kinase superfamily. Ser/Thr protein kinase family. This sequence in the N-terminal section; belongs to the leguminous lectin family. As to quaternary structure, interacts with ABCG40.

Its subcellular location is the cell membrane. It carries out the reaction L-seryl-[protein] + ATP = O-phospho-L-seryl-[protein] + ADP + H(+). The enzyme catalyses L-threonyl-[protein] + ATP = O-phospho-L-threonyl-[protein] + ADP + H(+). Promotes hydrogen peroxide H(2)O(2) production and cell death. Functionally, involved in resistance response to the pathogenic oomycetes Phytophthora infestans and Phytophthora capsici. This Arabidopsis thaliana (Mouse-ear cress) protein is L-type lectin-domain containing receptor kinase IX.2.